Here is a 354-residue protein sequence, read N- to C-terminus: Elongation factor Ts (354 aa).

An involved in Mg(2+) ion dislocation from EF-Tu region spans residues 81–84 (TDFV).

The protein belongs to the EF-Ts family.

The protein localises to the cytoplasm. Its function is as follows. Associates with the EF-Tu.GDP complex and induces the exchange of GDP to GTP. It remains bound to the aminoacyl-tRNA.EF-Tu.GTP complex up to the GTP hydrolysis stage on the ribosome. In Campylobacter curvus (strain 525.92), this protein is Elongation factor Ts.